The chain runs to 27 residues: GKAFDDGAFTGIREINLSINKETAIGD.

Residues 1 to 27 (GKAFDDGAFTGIREINLSINKETAIGD) enclose the Jacalin-type lectin domain.

The protein belongs to the jacalin lectin family. As to quaternary structure, tetramer of four alpha chains associated with two or four beta chains. Post-translationally, N-glycosylated.

Its function is as follows. D-galactose-specific lectin, binds the T-antigen structure Gal-beta1,3-GalNAc (Thomsen-Friedenreich-antigen-specific lectin). Potent and selective stimulant of distinct T- and B-cell functions. Shows a unique ability to specifically recognize IgA-1 from human serum. The protein is Agglutinin alpha chain of Artocarpus tonkinensis.